A 363-amino-acid chain; its full sequence is Trans-2,3-enoyl-CoA reductase-like (363 aa).

Position 37 is a phosphoserine (serine 37). The next 3 helical transmembrane spans lie at 143–163, 217–237, and 311–331; these read WTTVFLAEYTGPLLIYLLFYL, LIMSCAFYWGFTSWIAYYINH, and ISFTVMTQTLPVGIFTLLMSI.

It belongs to the steroid 5-alpha reductase family. In terms of tissue distribution, predominantly expressed in the heart and skeletal muscle.

The protein localises to the membrane. The protein resides in the endoplasmic reticulum. This is Trans-2,3-enoyl-CoA reductase-like (TECRL) from Homo sapiens (Human).